Consider the following 1223-residue polypeptide: DNA-directed RNA polymerase subunit beta' (1223 aa).

Zn(2+) contacts are provided by cysteine 60, cysteine 62, cysteine 75, and cysteine 78. Mg(2+)-binding residues include aspartate 449, aspartate 451, and aspartate 453. Residues cysteine 818, cysteine 892, cysteine 899, and cysteine 902 each coordinate Zn(2+).

This sequence belongs to the RNA polymerase beta' chain family. The RNAP catalytic core consists of 2 alpha, 1 beta, 1 beta' and 1 omega subunit. When a sigma factor is associated with the core the holoenzyme is formed, which can initiate transcription. Mg(2+) is required as a cofactor. It depends on Zn(2+) as a cofactor.

It catalyses the reaction RNA(n) + a ribonucleoside 5'-triphosphate = RNA(n+1) + diphosphate. Functionally, DNA-dependent RNA polymerase catalyzes the transcription of DNA into RNA using the four ribonucleoside triphosphates as substrates. This chain is DNA-directed RNA polymerase subunit beta', found in Lactobacillus gasseri (strain ATCC 33323 / DSM 20243 / BCRC 14619 / CIP 102991 / JCM 1131 / KCTC 3163 / NCIMB 11718 / NCTC 13722 / AM63).